Reading from the N-terminus, the 515-residue chain is Arabinose import ATP-binding protein AraG 2 (515 aa).

Residues 1–22 (MTMQTMTAASGHDAEAGTPPDG) are disordered. 2 ABC transporter domains span residues 25 to 260 (LALD…MVGR) and 260 to 511 (RSIE…LIKL). ATP is bound at residue 57–64 (GENGAGKS).

The protein belongs to the ABC transporter superfamily. Arabinose importer (TC 3.A.1.2.2) family. The complex is composed of two ATP-binding proteins (AraG), two transmembrane proteins (AraH) and a solute-binding protein (AraF).

The protein localises to the cell inner membrane. The enzyme catalyses L-arabinose(out) + ATP + H2O = L-arabinose(in) + ADP + phosphate + H(+). Functionally, part of the ABC transporter complex AraFGH involved in arabinose import. Responsible for energy coupling to the transport system. In Burkholderia cenocepacia (strain HI2424), this protein is Arabinose import ATP-binding protein AraG 2.